The chain runs to 477 residues: Glycogen synthase (477 aa).

Lysine 15 provides a ligand contact to ADP-alpha-D-glucose.

The protein belongs to the glycosyltransferase 1 family. Bacterial/plant glycogen synthase subfamily.

It carries out the reaction [(1-&gt;4)-alpha-D-glucosyl](n) + ADP-alpha-D-glucose = [(1-&gt;4)-alpha-D-glucosyl](n+1) + ADP + H(+). It participates in glycan biosynthesis; glycogen biosynthesis. In terms of biological role, synthesizes alpha-1,4-glucan chains using ADP-glucose. The polypeptide is Glycogen synthase (Salmonella typhi).